Here is a 250-residue protein sequence, read N- to C-terminus: Aquaporin TIP2-3 (250 aa).

An N-acetylmethionine modification is found at Met-1. Topologically, residues 1 to 24 are cytoplasmic; sequence MVKIEVGSVGDSFSVSSLKAYLSE. An N6,N6-dimethyllysine modification is found at Lys-3. A helical membrane pass occupies residues 25–45; that stretch reads FIATLLFVFAGVGSAVAFAKL. The Vacuolar segment spans residues 46–54; it reads TSDGALDPA. Residues 55-75 traverse the membrane as a helical segment; it reads GLVAIAIAHAFALFVGVSIAA. At 76-101 the chain is on the cytoplasmic side; sequence NISGGHLNPAVTLGLAIGGNITLITG. The NPA 1 signature appears at 83–85; the sequence is NPA. A helical transmembrane segment spans residues 102–122; sequence FFYWIAQCLGSIVACLLLVFV. Residues 123-134 lie on the Vacuolar side of the membrane; it reads TNGKSVPTHGVS. A helical membrane pass occupies residues 135–155; that stretch reads AGLGAVEGVVMEIVVTFALVY. The Cytoplasmic segment spans residues 156–168; the sequence is TVYATAADPKKGS. A helical membrane pass occupies residues 169–189; that stretch reads LGTIAPIAIGFIVGANILAAG. Over 190-217 the chain is Vacuolar; that stretch reads PFSGGSMNPARSFGPAVVSGDLSQIWIY. The short motif at 197–199 is the NPA 2 element; sequence NPA. The helical transmembrane segment at 218–238 threads the bilayer; that stretch reads WVGPLVGGALAGLIYGDVFIG. The Cytoplasmic segment spans residues 239–250; sequence SYEAVETREIRV.

It belongs to the MIP/aquaporin (TC 1.A.8) family. TIP (TC 1.A.8.10) subfamily. Interacts with cucumber mosaic virus (CMV) Protein 1a. As to expression, widely expressed.

The protein resides in the vacuole membrane. Its function is as follows. Transports methylammonium or ammonium in yeast cells, preferentially at high medium pH. May participate in vacuolar compartmentation and detoxification of ammonium. This chain is Aquaporin TIP2-3 (TIP2-3), found in Arabidopsis thaliana (Mouse-ear cress).